The primary structure comprises 425 residues: Metacaspase-1 (425 aa).

The segment at 1-110 (MSYNSNPYNG…PQLPNTQTQS (110 aa)) is disordered. The span at 13–28 (YPPYNTYTRPNYSPNN) shows a compositional bias: low complexity. Polar residues-rich tracts occupy residues 29-38 (GSQSNNTVHQ) and 88-110 (TGAN…QTQS). Residues histidine 214 and cysteine 270 contribute to the active site.

This sequence belongs to the peptidase C14B family.

Its subcellular location is the cytoplasm. The protein localises to the nucleus. Its function is as follows. Involved in cell death (apoptosis). The chain is Metacaspase-1 (pca1) from Schizosaccharomyces pombe (strain 972 / ATCC 24843) (Fission yeast).